A 300-amino-acid chain; its full sequence is Acetyl-coenzyme A carboxylase carboxyl transferase subunit beta 2 (300 aa).

Positions 26–294 constitute a CoA carboxyltransferase N-terminal domain; that stretch reads VWIKCPSCRE…ATAHKSEPIV (269 aa). Zn(2+) is bound by residues cysteine 30, cysteine 33, cysteine 49, and cysteine 51. The segment at 30–51 adopts a C4-type zinc-finger fold; the sequence is CPSCRELIYHKQLAERMKVCRC.

Belongs to the AccD/PCCB family. Acetyl-CoA carboxylase is a heterohexamer composed of biotin carboxyl carrier protein (AccB), biotin carboxylase (AccC) and two subunits each of ACCase subunit alpha (AccA) and ACCase subunit beta (AccD). It depends on Zn(2+) as a cofactor.

The protein resides in the cytoplasm. It carries out the reaction N(6)-carboxybiotinyl-L-lysyl-[protein] + acetyl-CoA = N(6)-biotinyl-L-lysyl-[protein] + malonyl-CoA. It participates in lipid metabolism; malonyl-CoA biosynthesis; malonyl-CoA from acetyl-CoA: step 1/1. Functionally, component of the acetyl coenzyme A carboxylase (ACC) complex. Biotin carboxylase (BC) catalyzes the carboxylation of biotin on its carrier protein (BCCP) and then the CO(2) group is transferred by the transcarboxylase to acetyl-CoA to form malonyl-CoA. The sequence is that of Acetyl-coenzyme A carboxylase carboxyl transferase subunit beta 2 from Roseiflexus sp. (strain RS-1).